Reading from the N-terminus, the 654-residue chain is Probable protein phosphatase 2C 23 (654 aa).

The interval 11–30 (CLTGGAGRNKKPELSILEPD) is disordered. Position 147 is a phosphoserine (serine 147). One can recognise a PPM-type phosphatase domain in the interval 243–645 (DVSLESQNLQ…DDVSIVVISL (403 aa)). Mn(2+)-binding residues include aspartate 280 and glycine 281. A disordered region spans residues 309–336 (DDPKTDAKSSDEADVENRDSSSEKKSKN). Mn(2+)-binding residues include aspartate 573 and aspartate 636.

It belongs to the PP2C family. Mg(2+) serves as cofactor. It depends on Mn(2+) as a cofactor. In terms of tissue distribution, expressed in seedlings, roots, leaves, stems, young inflorescences, flowers and siliques.

It localises to the nucleus. The enzyme catalyses O-phospho-L-seryl-[protein] + H2O = L-seryl-[protein] + phosphate. It carries out the reaction O-phospho-L-threonyl-[protein] + H2O = L-threonyl-[protein] + phosphate. Functionally, involved in leaf development regulation. The sequence is that of Probable protein phosphatase 2C 23 (PLL4) from Arabidopsis thaliana (Mouse-ear cress).